The sequence spans 550 residues: Dipeptide-binding protein (550 aa).

Positions 1–22 (MKQAKIIGLSTVIALSGIILVA) are cleaved as a signal peptide. C23 carries N-palmitoyl cysteine lipidation. C23 carries the S-diacylglycerol cysteine lipid modification.

Belongs to the bacterial solute-binding protein 5 family. The complex is composed of two ATP-binding proteins (DppD and DppF), two transmembrane proteins (DppB and DppC) and a solute-binding protein (DppA).

It is found in the cell membrane. In terms of biological role, part of the ABC transporter DppABCDF involved in dipeptide transport. Binds di- and tripeptides with high affinity. Requires a free N-terminal alpha-amino group and an alpha-peptide bound contiguous with the N-terminal amino group, has a strong selectivity for L-residues, and shows preference for dipeptides containing methionine or arginine, followed by hydrophobic tripeptides consisting of leucine or valine residues. This Lactococcus lactis subsp. cremoris (strain MG1363) protein is Dipeptide-binding protein.